Here is a 246-residue protein sequence, read N- to C-terminus: UDP-N-acetyl-D-mannosaminuronic acid transferase (246 aa).

It belongs to the glycosyltransferase 26 family.

The catalysed reaction is UDP-N-acetyl-alpha-D-mannosaminouronate + N-acetyl-alpha-D-glucosaminyl-di-trans,octa-cis-undecaprenyl diphosphate = beta-D-ManNAcA-(1-&gt;4)-alpha-D-GlcNAc-di-trans,octa-cis-undecaprenyl diphosphate + UDP + H(+). Its pathway is bacterial outer membrane biogenesis; enterobacterial common antigen biosynthesis. Catalyzes the synthesis of Und-PP-GlcNAc-ManNAcA (Lipid II), the second lipid-linked intermediate involved in enterobacterial common antigen (ECA) synthesis. The polypeptide is UDP-N-acetyl-D-mannosaminuronic acid transferase (Salmonella schwarzengrund (strain CVM19633)).